The chain runs to 306 residues: tRNA pseudouridine synthase B (306 aa).

The active-site Nucleophile is the aspartate 47.

The protein belongs to the pseudouridine synthase TruB family. Type 1 subfamily.

The enzyme catalyses uridine(55) in tRNA = pseudouridine(55) in tRNA. Functionally, responsible for synthesis of pseudouridine from uracil-55 in the psi GC loop of transfer RNAs. This is tRNA pseudouridine synthase B from Neisseria gonorrhoeae (strain NCCP11945).